The following is a 566-amino-acid chain: 15-cis-phytoene desaturase, chloroplastic/chromoplastic (566 aa).

Residues 1–86 (MVVFGNVSAA…ASLSASFRSA (86 aa)) constitute a chloroplast and chromoplast transit peptide. Residues Ala103, 122–123 (EA), Lys130, 147–148 (HI), and Tyr153 contribute to the FAD site. Arg288 is a substrate binding site. Residues Ile330 and Asp519 each coordinate FAD. A substrate-binding site is contributed by Ala527. Met529 is a binding site for FAD.

It belongs to the carotenoid/retinoid oxidoreductase family. As to quaternary structure, homotetramer. The cofactor is FAD.

It is found in the plastid. The protein localises to the chloroplast. It localises to the chromoplast. The protein resides in the membrane. It catalyses the reaction 2 a plastoquinone + 15-cis-phytoene = 9,9',15-tri-cis-zeta-carotene + 2 a plastoquinol. It functions in the pathway carotenoid biosynthesis; lycopene biosynthesis. Converts phytoene into zeta-carotene via the intermediary of phytofluene by the symmetrical introduction of two double bonds at the C-11 and C-11' positions of phytoene with a concomitant isomerization of two neighboring double bonds at the C9 and C9' positions from trans to cis. In Arabidopsis thaliana (Mouse-ear cress), this protein is 15-cis-phytoene desaturase, chloroplastic/chromoplastic (PDS).